We begin with the raw amino-acid sequence, 167 residues long: Ribosome-binding factor A (167 aa).

The interval 122 to 167 is disordered; the sequence is LAASAKHAGEADPYKGDSPEDIDEDDFDEEDTDLSGDNDLDEDANR. The segment covering 128-139 has biased composition (basic and acidic residues); that stretch reads HAGEADPYKGDS. Over residues 140–167 the composition is skewed to acidic residues; the sequence is PEDIDEDDFDEEDTDLSGDNDLDEDANR.

Belongs to the RbfA family. In terms of assembly, monomer. Binds 30S ribosomal subunits, but not 50S ribosomal subunits or 70S ribosomes.

Its subcellular location is the cytoplasm. One of several proteins that assist in the late maturation steps of the functional core of the 30S ribosomal subunit. Associates with free 30S ribosomal subunits (but not with 30S subunits that are part of 70S ribosomes or polysomes). Required for efficient processing of 16S rRNA. May interact with the 5'-terminal helix region of 16S rRNA. In Paenarthrobacter aurescens (strain TC1), this protein is Ribosome-binding factor A.